A 134-amino-acid polypeptide reads, in one-letter code: MASNRGAGGSLYGGADPYRSREGLSTRNASGSEEIQLRIDPMHSDLDDEILGLHGQVRQLKNIAQEIGSEAKSQRDFLDELQMTLIRAQAGVKNNIRKLNLSIIRSGNNHIMHVVLFALLLFFILYMWSKMFKR.

The segment covering 1–12 has biased composition (gly residues); it reads MASNRGAGGSLY. The tract at residues 1–31 is disordered; it reads MASNRGAGGSLYGGADPYRSREGLSTRNASG. Over 1–110 the chain is Cytoplasmic; the sequence is MASNRGAGGS…LSIIRSGNNH (110 aa). One can recognise a t-SNARE coiled-coil homology domain in the interval 40-102; that stretch reads DPMHSDLDDE…KNNIRKLNLS (63 aa). The chain crosses the membrane as a helical; Anchor for type IV membrane protein span at residues 111-131; that stretch reads IMHVVLFALLLFFILYMWSKM. Over 132–134 the chain is Vesicular; sequence FKR.

It belongs to the BET1 family.

It localises to the golgi apparatus membrane. It is found in the endoplasmic reticulum membrane. Functionally, required for vesicular transport from the ER to the Golgi complex. Functions as a SNARE associated with ER-derived vesicles. In Arabidopsis thaliana (Mouse-ear cress), this protein is Bet1-like protein At1g29060.